The chain runs to 137 residues: MLQPKRTKFRKQHKGRIHGEAKGGFLLNFGGFGLKATEPERVTARQIEAARRAITRHMKRQGRVWIRIFPDTPVTSKPTEVRMGKGKGSVDFWAAKVKPGRIMFEIDGVSETIAREALRLGAMKLPITTRIVVREDW.

The protein belongs to the universal ribosomal protein uL16 family. As to quaternary structure, part of the 50S ribosomal subunit.

Its function is as follows. Binds 23S rRNA and is also seen to make contacts with the A and possibly P site tRNAs. This is Large ribosomal subunit protein uL16 from Cereibacter sphaeroides (strain ATCC 17025 / ATH 2.4.3) (Rhodobacter sphaeroides).